Reading from the N-terminus, the 1148-residue chain is Envelopment polyprotein (1148 aa).

Positions 1 to 23 (MGKSSPVCLYLILQGLLLFDTVN) are cleaved as a signal peptide. At 24 to 496 (AKNLNELKME…PGLHGWATVL (473 aa)) the chain is on the lumenal side. Intrachain disulfides connect C34–C159, C68–C165, C117–C136, C141–C146, C183–C193, and C218–C257. N142 carries an N-linked (GlcNAc...) asparagine; by host glycan. N357 is a glycosylation site (N-linked (GlcNAc...) asparagine; by host). 4 cysteine pairs are disulfide-bonded: C386–C445, C390–C399, C415–C434, and C462–C485. N409 is a glycosylation site (N-linked (GlcNAc...) asparagine; by host). The helical transmembrane segment at 497–517 (LLLTFCFGWVLIPTITMILLK) threads the bilayer. The Cytoplasmic portion of the chain corresponds to 518–637 (ILIAFAYLCS…LSLFRYRSRF (120 aa)). The binding to the ribonucleoprotein stretch occupies residues 526–543 (CSKYNTDSKFRILVEKVK). 2 consecutive CCHC-type zinc fingers follow at residues 555–575 (CEVC…RKSC) and 580–601 (CPYC…FKVC). 2 binding to the ribonucleoprotein regions span residues 598 to 615 (FKVC…KKSL) and 621 to 635 (MQGC…RYRS). One can recognise an ITAM domain in the interval 621–644 (MQGCYRTLSLFRYRSRFFVGLVWC). The YxxL motif lies at 625-628 (YRTL). A helical membrane pass occupies residues 638–658 (FVGLVWCMLLVLELIVWAASA). Residues 659–1115 (ETQNLNDGWT…WVLGVLNGNW (457 aa)) lie on the Lumenal side of the membrane. 8 disulfide bridges follow: C745/C780, C749/C787, C761/C894, C775/C905, C790/C913, C816/C825, C833/C842, and C873/C877. Residues 767–787 (YEYETGWGCNPPDCPGVGTGC) form a fusion loop region. The N-linked (GlcNAc...) asparagine; by host glycan is linked to N937. Cystine bridges form between C979-C1009, C1002-C1054, C1019-C1024, C1055-C1060, and C1094-C1098. The chain crosses the membrane as a helical span at residues 1116–1136 (MVVAVLIALLILSIFLFALCC). The tract at residues 1131 to 1148 (LFALCCPRRPSYKKDHKP) is binding to the ribonucleoprotein. Residues 1137–1148 (PRRPSYKKDHKP) lie on the Cytoplasmic side of the membrane.

This sequence belongs to the hantavirus envelope glycoprotein family. As to quaternary structure, homodimer. Homotetramer; forms heterotetrameric Gn-Gc spikes in the pre-fusion conformation. Interacts (via C-terminus) with the nucleoprotein. Interacts with host TUFM; this interaction contributes to the virus-induced degradation of mitochondria by autophagy, which leads to degradation of host MAVS and inhibition of type I interferon (IFN) responses. Interacts with host MAP1LC3B; this interaction contributes to the virus-induced degradation of mitochondria by autophagy, which leads to degradation of host MAVS and inhibition of type I interferon (IFN) responses. In terms of assembly, homodimer. Homotetramer; forms heterotetrameric Gn-Gc spikes in the pre-fusion conformation. Homotrimer; forms homotrimer in the post-fusion conformation at acidic pH. Interacts (via C-terminus) with the nucleoprotein. In terms of processing, envelope polyprotein precursor is quickly cleaved in vivo just after synthesis, presumably by host signal peptidase.

The protein localises to the virion membrane. It is found in the host cell surface. It localises to the host Golgi apparatus membrane. The protein resides in the host endoplasmic reticulum membrane. Its subcellular location is the host mitochondrion. Forms homotetramers with glycoprotein C at the surface of the virion. Attaches the virion to host cell receptors including integrin ITGAV/ITGB3. This attachment induces virion internalization predominantly through clathrin-dependent endocytosis. Mediates the assembly and budding of infectious virus particles through its interaction with the nucleocapsid protein and the viral genome. May dysregulate normal immune and endothelial cell responses through an ITAM motif. Translocates to mitochondria, binds to host TUFM and recruits MAP1LC3B. These interactions induce mitochondrial autophagy and therefore destruction of host MAVS leading to inhibition of type I interferon (IFN) responses. Concomitant breakdown of glycoprotein N is apparently prevented by the nucleoprotein that may inhibit Gn-stimulated autophagosome-lysosome fusion. Interacts with the viral genomic RNA. Its function is as follows. Forms heterooctamers with glycoprotein N at the surface of the virion. Attaches the virion to host cell receptors including integrin ITGAV/ITGB3. This attachment induces virion internalization predominantly through clathrin-dependent endocytosis. Class II fusion protein that promotes fusion of viral membrane with host endosomal membrane after endocytosis of the virion. This is Envelopment polyprotein (GP) from Homo sapiens (Human).